The following is a 520-amino-acid chain: Fusaridione A cluster transcription factor fsdR (520 aa).

Residues 1 to 30 (MSTGPPSGISLVSMTTPRKSGQHTPESWSK) are disordered.

Its subcellular location is the nucleus. Its function is as follows. Transcription factor that regulates the expression of the gene cluster that mediates the biosynthesis of fusaridione A. This is Fusaridione A cluster transcription factor fsdR from Fusarium heterosporum.